A 502-amino-acid polypeptide reads, in one-letter code: ATP synthase subunit alpha (502 aa).

Residues 115-138 (VDGLGPIETTETRPIESPAPGVMD) form a disordered region. ATP is bound at residue 169 to 176 (GDRQTGKT).

It belongs to the ATPase alpha/beta chains family. F-type ATPases have 2 components, CF(1) - the catalytic core - and CF(0) - the membrane proton channel. CF(1) has five subunits: alpha(3), beta(3), gamma(1), delta(1), epsilon(1). CF(0) has three main subunits: a(1), b(2) and c(9-12). The alpha and beta chains form an alternating ring which encloses part of the gamma chain. CF(1) is attached to CF(0) by a central stalk formed by the gamma and epsilon chains, while a peripheral stalk is formed by the delta and b chains.

It is found in the cell membrane. It catalyses the reaction ATP + H2O + 4 H(+)(in) = ADP + phosphate + 5 H(+)(out). In terms of biological role, produces ATP from ADP in the presence of a proton gradient across the membrane. The alpha chain is a regulatory subunit. In Geobacillus sp. (strain WCH70), this protein is ATP synthase subunit alpha.